The following is a 657-amino-acid chain: Macrolide export ATP-binding/permease protein MacB (657 aa).

Residues 5–242 (LELLDVHRTY…RAVTGESAFD (238 aa)) form the ABC transporter domain. Residue 41 to 48 (GASGSGKS) participates in ATP binding. 4 helical membrane passes run 276–296 (FLSV…MALG), 538–558 (IAAI…LVSV), 596–616 (IGVF…GWAV), and 620–640 (LLSV…FGLW).

Belongs to the ABC transporter superfamily. Macrolide exporter (TC 3.A.1.122) family. As to quaternary structure, homodimer.

Its subcellular location is the cell inner membrane. Functionally, non-canonical ABC transporter that contains transmembrane domains (TMD), which form a pore in the inner membrane, and an ATP-binding domain (NBD), which is responsible for energy generation. Confers resistance against macrolides. The polypeptide is Macrolide export ATP-binding/permease protein MacB (Chlorobium phaeobacteroides (strain DSM 266 / SMG 266 / 2430)).